We begin with the raw amino-acid sequence, 587 residues long: 5-aminolevulinate synthase, erythroid-specific, mitochondrial (587 aa).

A mitochondrion-targeting transit peptide spans 1–49 (MVAAAMLLRSCPVLSQGPTGLLGKVAKTYQFLFSIGRCPILATQGPTCS). Arg-163 provides a ligand contact to succinyl-CoA. Positions 258 and 259 each coordinate pyridoxal 5'-phosphate. Ser-280 and Lys-299 together coordinate succinyl-CoA. 3 residues coordinate pyridoxal 5'-phosphate: Ser-332, His-360, and Thr-388. The active site involves Lys-391. N6-(pyridoxal phosphate)lysine is present on Lys-391. Positions 420 and 421 each coordinate pyridoxal 5'-phosphate. Thr-508 contacts succinyl-CoA.

The protein belongs to the class-II pyridoxal-phosphate-dependent aminotransferase family. In terms of assembly, homodimer. Interacts with SUCLA2. The cofactor is pyridoxal 5'-phosphate. Predomnantly expressed in erythroid cells.

Its subcellular location is the mitochondrion inner membrane. It is found in the mitochondrion. It catalyses the reaction succinyl-CoA + glycine + H(+) = 5-aminolevulinate + CO2 + CoA. Its pathway is porphyrin-containing compound metabolism; protoporphyrin-IX biosynthesis; 5-aminolevulinate from glycine: step 1/1. In terms of biological role, catalyzes the pyridoxal 5'-phosphate (PLP)-dependent condensation of succinyl-CoA and glycine to form aminolevulinic acid (ALA), with CoA and CO2 as by-products. Contributes significantly to heme formation during erythropoiesis. The protein is 5-aminolevulinate synthase, erythroid-specific, mitochondrial (Alas2) of Mus musculus (Mouse).